A 483-amino-acid chain; its full sequence is Isocitrate dehydrogenase [NADP] (483 aa).

Residue T74 participates in NADP(+) binding. Positions 83, 85, 89, 99, and 121 each coordinate D-threo-isocitrate. Residue D232 participates in Mg(2+) binding. Residues 264–270 (HGSAPDI) and N277 each bind NADP(+).

This sequence belongs to the isocitrate and isopropylmalate dehydrogenases family. As to quaternary structure, homodimer. Mg(2+) is required as a cofactor. It depends on Mn(2+) as a cofactor.

It carries out the reaction D-threo-isocitrate + NADP(+) = 2-oxoglutarate + CO2 + NADPH. Its function is as follows. Catalyzes the oxidative decarboxylation of isocitrate to 2-oxoglutarate and carbon dioxide with the concomitant reduction of NADP(+). This is Isocitrate dehydrogenase [NADP] (icd) from Rickettsia bellii (strain RML369-C).